The primary structure comprises 315 residues: DNA-directed RNA polymerase subunit alpha (315 aa).

The tract at residues 1–228 is alpha N-terminal domain (alpha-NTD); that stretch reads MLEIEKPIIE…EHFKLFMSLT (228 aa). The tract at residues 245–315 is alpha C-terminal domain (alpha-CTD); the sequence is KEKVLEMTVE…LGLCLKLNDE (71 aa).

It belongs to the RNA polymerase alpha chain family. Homodimer. The RNAP catalytic core consists of 2 alpha, 1 beta, 1 beta' and 1 omega subunit. When a sigma factor is associated with the core the holoenzyme is formed, which can initiate transcription.

It carries out the reaction RNA(n) + a ribonucleoside 5'-triphosphate = RNA(n+1) + diphosphate. Functionally, DNA-dependent RNA polymerase catalyzes the transcription of DNA into RNA using the four ribonucleoside triphosphates as substrates. The protein is DNA-directed RNA polymerase subunit alpha of Clostridium botulinum (strain Alaska E43 / Type E3).